The chain runs to 351 residues: Phosphate acetyltransferase (351 aa).

This sequence belongs to the phosphate acetyltransferase and butyryltransferase family.

It localises to the cytoplasm. It carries out the reaction acetyl-CoA + phosphate = acetyl phosphate + CoA. It functions in the pathway metabolic intermediate biosynthesis; acetyl-CoA biosynthesis; acetyl-CoA from acetate: step 2/2. This is Phosphate acetyltransferase (pta) from Rickettsia prowazekii (strain Madrid E).